Consider the following 542-residue polypeptide: CTP synthase (542 aa).

The segment at 1–265 (MTRYIFVTGG…DDFVVERFGL (265 aa)) is amidoligase domain. Ser13 provides a ligand contact to CTP. A UTP-binding site is contributed by Ser13. ATP is bound by residues 14–19 (SLGKGI) and Asp71. Residues Asp71 and Glu139 each coordinate Mg(2+). Residues 146–148 (DIE), 186–191 (KTKPTQ), and Lys222 each bind CTP. Residues 186-191 (KTKPTQ) and Lys222 contribute to the UTP site. In terms of domain architecture, Glutamine amidotransferase type-1 spans 290 to 541 (TIAMVGKYME…VKAALAQKNK (252 aa)). Residue Gly351 coordinates L-glutamine. Cys378 acts as the Nucleophile; for glutamine hydrolysis in catalysis. Residues 379-382 (LGMQ), Glu402, and Arg469 each bind L-glutamine. Catalysis depends on residues His514 and Glu516.

This sequence belongs to the CTP synthase family. Homotetramer.

The catalysed reaction is UTP + L-glutamine + ATP + H2O = CTP + L-glutamate + ADP + phosphate + 2 H(+). It catalyses the reaction L-glutamine + H2O = L-glutamate + NH4(+). It carries out the reaction UTP + NH4(+) + ATP = CTP + ADP + phosphate + 2 H(+). It functions in the pathway pyrimidine metabolism; CTP biosynthesis via de novo pathway; CTP from UDP: step 2/2. Its activity is regulated as follows. Allosterically activated by GTP, when glutamine is the substrate; GTP has no effect on the reaction when ammonia is the substrate. The allosteric effector GTP functions by stabilizing the protein conformation that binds the tetrahedral intermediate(s) formed during glutamine hydrolysis. Inhibited by the product CTP, via allosteric rather than competitive inhibition. In terms of biological role, catalyzes the ATP-dependent amination of UTP to CTP with either L-glutamine or ammonia as the source of nitrogen. Regulates intracellular CTP levels through interactions with the four ribonucleotide triphosphates. The protein is CTP synthase of Pseudomonas entomophila (strain L48).